The sequence spans 614 residues: Syringomycin synthase SyrB1 (614 aa).

The region spanning 535 to 610 (KGLSEQEHFV…VLADHITRSL (76 aa)) is the Carrier domain. O-(pantetheine 4'-phosphoryl)serine is present on Ser570.

It belongs to the ATP-dependent AMP-binding enzyme family. Pantetheine 4'-phosphate serves as cofactor.

It catalyses the reaction holo-[peptidyl-carrier protein] + L-threonine + ATP = L-threonyl-[peptidyl-carrier protein] + AMP + diphosphate. Its function is as follows. Involved in the biosynthesis of syringomycin E, a cyclic lipodepsinonapeptide toxin with phytotoxic activity. Specifically adenylates L-threonine and loads it onto its peptidyl carrier domain, via a thioester linkage to the phosphopanthetheine moiety. Is highly specific for L-threonine. In Pseudomonas syringae pv. syringae, this protein is Syringomycin synthase SyrB1.